We begin with the raw amino-acid sequence, 84 residues long: Cell division topological specificity factor (84 aa).

Belongs to the MinE family.

Prevents the cell division inhibition by proteins MinC and MinD at internal division sites while permitting inhibition at polar sites. This ensures cell division at the proper site by restricting the formation of a division septum at the midpoint of the long axis of the cell. In Paraburkholderia phymatum (strain DSM 17167 / CIP 108236 / LMG 21445 / STM815) (Burkholderia phymatum), this protein is Cell division topological specificity factor.